The chain runs to 908 residues: Flap endonuclease GEN homolog 1 (908 aa).

The segment at 2–96 (GVNDLWQILE…SKRNQSRYGS (95 aa)) is XPG-N domain. Residues aspartate 30, glutamate 75, glutamate 134, glutamate 136, aspartate 155, aspartate 157, and aspartate 208 each contribute to the Mg(2+) site. Positions 122–208 (ECLGIPWVQA…VGLAILLGCD (87 aa)) are XPG-I domain. The 5'-3' exonuclease domain stretch occupies residues 208–384 (DYLPKGVPGV…LLVLLTHYDM (177 aa)). The segment at 390 to 464 (GSRNSNQLQP…VYQKQKLEIK (75 aa)) is chromodomain. Serine 801 and serine 802 each carry phosphoserine.

It belongs to the XPG/RAD2 endonuclease family. GEN subfamily. Largely monomeric, dimerizes on the Holliday junction and the first nick occurs upon dimerization at the junction. The cofactor is Mg(2+).

The protein localises to the nucleus. Functionally, endonuclease which resolves Holliday junctions (HJs) by the introduction of symmetrically related cuts across the junction point, to produce nicked duplex products in which the nicks can be readily ligated. Four-way DNA intermediates, also known as Holliday junctions, are formed during homologous recombination and DNA repair, and their resolution is necessary for proper chromosome segregation. Cleaves HJs by a nick and counter-nick mechanism involving dual coordinated incisions that lead to the formation of ligatable nicked duplex products. Cleavage of the first strand is rate limiting, while second strand cleavage is rapid. Largely monomeric, dimerizes on the HJ and the first nick occurs upon dimerization at the junction. Efficiently cleaves both single and double HJs contained within large recombination intermediates. Exhibits a weak sequence preference for incision between two G residues that reside in a T-rich region of DNA. Also has endonuclease activity on 5'-flap and replication fork (RF) DNA substrates. The polypeptide is Flap endonuclease GEN homolog 1 (GEN1) (Homo sapiens (Human)).